Consider the following 704-residue polypeptide: Glycine--tRNA ligase beta subunit (704 aa).

Belongs to the class-II aminoacyl-tRNA synthetase family. As to quaternary structure, tetramer of two alpha and two beta subunits.

The protein resides in the cytoplasm. The catalysed reaction is tRNA(Gly) + glycine + ATP = glycyl-tRNA(Gly) + AMP + diphosphate. The chain is Glycine--tRNA ligase beta subunit from Delftia acidovorans (strain DSM 14801 / SPH-1).